Consider the following 309-residue polypeptide: tRNA pseudouridine synthase B (309 aa).

The active-site Nucleophile is aspartate 40.

The protein belongs to the pseudouridine synthase TruB family. Type 1 subfamily.

It catalyses the reaction uridine(55) in tRNA = pseudouridine(55) in tRNA. Its function is as follows. Responsible for synthesis of pseudouridine from uracil-55 in the psi GC loop of transfer RNAs. The protein is tRNA pseudouridine synthase B of Mycobacterium avium (strain 104).